The sequence spans 370 residues: Anhydro-N-acetylmuramic acid kinase (370 aa).

Residue 13–20 (GTSMDGVD) coordinates ATP.

This sequence belongs to the anhydro-N-acetylmuramic acid kinase family.

The enzyme catalyses 1,6-anhydro-N-acetyl-beta-muramate + ATP + H2O = N-acetyl-D-muramate 6-phosphate + ADP + H(+). Its pathway is amino-sugar metabolism; 1,6-anhydro-N-acetylmuramate degradation. It participates in cell wall biogenesis; peptidoglycan recycling. Functionally, catalyzes the specific phosphorylation of 1,6-anhydro-N-acetylmuramic acid (anhMurNAc) with the simultaneous cleavage of the 1,6-anhydro ring, generating MurNAc-6-P. Is required for the utilization of anhMurNAc either imported from the medium or derived from its own cell wall murein, and thus plays a role in cell wall recycling. This chain is Anhydro-N-acetylmuramic acid kinase, found in Shewanella denitrificans (strain OS217 / ATCC BAA-1090 / DSM 15013).